An 867-amino-acid polypeptide reads, in one-letter code: FO synthase (867 aa).

Residues 1–22 form a disordered region; it reads MTTSATSGTGPADPAGPTENSM. Radical SAM core domains are found at residues 75-325 and 534-769; these read ITYS…LQAP and VTYI…LLHP. Residues 76–407 are cofG-like; the sequence is TYSKSVFVPL…PRLRPHVAAL (332 aa). The [4Fe-4S] cluster site is built by C89, C93, C96, C548, C552, and C555. Residues 511–844 form a cofH-like region; it reads EGPALDALCG…KPRTTLYGPV (334 aa). Residues 835 to 867 form a disordered region; the sequence is KPRTTLYGPVPEERQRAARDSDGHLPELLPVLD. Basic and acidic residues predominate over residues 845–859; sequence PEERQRAARDSDGHL.

It in the N-terminal section; belongs to the radical SAM superfamily. CofG family. The protein in the C-terminal section; belongs to the radical SAM superfamily. CofH family. The cofactor is [4Fe-4S] cluster.

The catalysed reaction is 5-amino-6-(D-ribitylamino)uracil + L-tyrosine + S-adenosyl-L-methionine = 5-amino-5-(4-hydroxybenzyl)-6-(D-ribitylimino)-5,6-dihydrouracil + 2-iminoacetate + 5'-deoxyadenosine + L-methionine + H(+). The enzyme catalyses 5-amino-5-(4-hydroxybenzyl)-6-(D-ribitylimino)-5,6-dihydrouracil + S-adenosyl-L-methionine = 7,8-didemethyl-8-hydroxy-5-deazariboflavin + 5'-deoxyadenosine + L-methionine + NH4(+) + H(+). It functions in the pathway cofactor biosynthesis; coenzyme F0 biosynthesis. Functionally, catalyzes the radical-mediated synthesis of 7,8-didemethyl-8-hydroxy-5-deazariboflavin (FO) from 5-amino-6-(D-ribitylamino)uracil and L-tyrosine. The sequence is that of FO synthase (fbiC) from Streptomyces coelicolor (strain ATCC BAA-471 / A3(2) / M145).